The primary structure comprises 233 residues: Nuclear speckle RNA-binding protein A (233 aa).

Disordered stretches follow at residues 1-54 (MADG…VPDT), 68-92 (VQSG…GGNV), and 214-233 (FLRL…RGRR). Positions 71 to 91 (GEGGSVSMGRSGGGGGGGGGN) are enriched in gly residues. Residues 136-222 (NTLYVEGLPS…KFLRLQFSRK (87 aa)) form the RRM domain.

As to expression, expressed in root meristems, lateral root primordia and root vascular tissues.

Its subcellular location is the nucleus speckle. Its function is as follows. Alternative splicing (AS) regulator that binds to specific mRNAs and modulates auxin effects on the transcriptome. Displaced from its targets upon binding to AS competitor long non-coding RNA (ASCO-RNA). This Arabidopsis thaliana (Mouse-ear cress) protein is Nuclear speckle RNA-binding protein A.